The following is a 118-amino-acid chain: Large ribosomal subunit protein bL19 (118 aa).

The protein belongs to the bacterial ribosomal protein bL19 family.

This protein is located at the 30S-50S ribosomal subunit interface and may play a role in the structure and function of the aminoacyl-tRNA binding site. The chain is Large ribosomal subunit protein bL19 from Helicobacter pylori (strain P12).